The sequence spans 132 residues: Fatty acid-binding protein, liver (132 aa).

Valine 1 is modified (N-acetylvaline). The residue at position 19 (tyrosine 19) is a Phosphotyrosine; by Tyr-kinases.

Belongs to the calycin superfamily. Fatty-acid binding protein (FABP) family.

The protein resides in the cytoplasm. Functionally, FABPs are thought to play a role in the intracellular transport of long-chain fatty acids and their acyl-CoA esters. The polypeptide is Fatty acid-binding protein, liver (Ginglymostoma cirratum (Nurse shark)).